A 38-amino-acid polypeptide reads, in one-letter code: Large ribosomal subunit protein bL36 (38 aa).

It belongs to the bacterial ribosomal protein bL36 family.

This is Large ribosomal subunit protein bL36 from Chlorobaculum parvum (strain DSM 263 / NCIMB 8327) (Chlorobium vibrioforme subsp. thiosulfatophilum).